Reading from the N-terminus, the 69-residue chain is Protein transport protein Sec61 subunit gamma-3 (69 aa).

Methionine 1 is subject to N-acetylmethionine. Residues 1-32 (MEAIDSAIDPLRDFAKSSVRLVQRCHKPDRKE) lie on the Cytoplasmic side of the membrane. A helical membrane pass occupies residues 33 to 61 (FTKVAVRTAIGFVVMGFVGFFVKLVFIPI). Residues 62–69 (NNIIVGSS) lie on the Extracellular side of the membrane.

This sequence belongs to the SecE/SEC61-gamma family. As to quaternary structure, heterotrimeric complex composed of SEC61-alpha, SEC61-beta and SEC61-gamma.

It is found in the endoplasmic reticulum membrane. Functionally, necessary for protein translocation in the endoplasmic reticulum. The chain is Protein transport protein Sec61 subunit gamma-3 (SEC61G3) from Arabidopsis thaliana (Mouse-ear cress).